A 514-amino-acid polypeptide reads, in one-letter code: L-carnitine/gamma-butyrobetaine antiporter (514 aa).

At 1 to 11 the chain is on the cytoplasmic side; sequence MSKDNKKAGIE. A helical transmembrane segment spans residues 12-30; sequence PKVFFPPLIIVGILCWLTV. Topologically, residues 31 to 42 are periplasmic; that stretch reads RDLDASNEVINA. The helical transmembrane segment at 43 to 68 threads the bilayer; the sequence is VFSYVTNVWGWAFEWYMVIMFGGWFW. Over 69–91 the chain is Cytoplasmic; sequence LVFGRYAKKRLGDEKPEFSTASW. Residues 92–112 traverse the membrane as a helical segment; sequence IFMMFASCTSAAVLFWGSIEI. Residues 113-131 lie on the Periplasmic side of the membrane; the sequence is YYYISSPPFGMEGYSAPAK. Residues 132-154 form a helical membrane-spanning segment; it reads EIGLAYSLFHWGPLPWATYSFLS. At 155 to 185 the chain is on the cytoplasmic side; the sequence is VAFAYFFFVRKMEVIRPSSTLTPLVGEKHVN. A helical membrane pass occupies residues 186 to 216; that stretch reads GLFGTVVDNFYLVALILAMGTSLGLATPLVT. Residues 217–230 lie on the Periplasmic side of the membrane; it reads ECIQYLFGIPHTLQ. Residues 231-249 form a helical membrane-spanning segment; sequence LDAIIISCWILLNAICVAF. At 250–251 the chain is on the cytoplasmic side; sequence GL. The helical transmembrane segment at 252–277 threads the bilayer; the sequence is QKGVKIASDVRTYLSFLMLGWVFIVG. At 278-311 the chain is on the periplasmic side; that stretch reads GASFIVNYFTDSVGTLLMYMPRMLFYTDPIGKGG. The helical transmembrane segment at 312 to 335 threads the bilayer; the sequence is FPQAWTVFYWAWWVIYAIQMSIFL. At 336 to 347 the chain is on the cytoplasmic side; sequence ARISKGRTVREL. The helical transmembrane segment at 348–369 threads the bilayer; it reads CLGMVSGLTAGTWLIWTILGGN. The Periplasmic portion of the chain corresponds to 370–404; the sequence is TLQLIDQNILNIPQLIDQYGVPRAIIETWAALPLS. The helical transmembrane segment at 405 to 434 threads the bilayer; sequence TATMWGFFILCFIATVTLINACSYTLAMST. Residues 435 to 445 are Cytoplasmic-facing; that stretch reads CRSMKEGAEPP. Residues 446 to 464 form a helical membrane-spanning segment; that stretch reads LLVRIGWSVLVGIIGIILL. The Periplasmic portion of the chain corresponds to 465–468; that stretch reads ALGG. Residues 469 to 492 traverse the membrane as a helical segment; it reads LKPIQTAIIAGGCPLFFVNIMVTL. Over 493 to 514 the chain is Cytoplasmic; the sequence is SFIKDAKVHWKDCSPYTQKMTH.

This sequence belongs to the BCCT transporter (TC 2.A.15) family. CaiT subfamily. In terms of assembly, homotrimer.

It is found in the cell inner membrane. The enzyme catalyses 4-(trimethylamino)butanoate(in) + (R)-carnitine(out) = 4-(trimethylamino)butanoate(out) + (R)-carnitine(in). Its pathway is amine and polyamine metabolism; carnitine metabolism. In terms of biological role, catalyzes the exchange of L-carnitine for gamma-butyrobetaine. The sequence is that of L-carnitine/gamma-butyrobetaine antiporter from Proteus mirabilis (strain HI4320).